We begin with the raw amino-acid sequence, 152 residues long: Endoribonuclease YbeY (152 aa).

Positions 116, 120, and 126 each coordinate Zn(2+).

It belongs to the endoribonuclease YbeY family. Requires Zn(2+) as cofactor.

The protein localises to the cytoplasm. Functionally, single strand-specific metallo-endoribonuclease involved in late-stage 70S ribosome quality control and in maturation of the 3' terminus of the 16S rRNA. The sequence is that of Endoribonuclease YbeY from Mycoplasma mobile (strain ATCC 43663 / 163K / NCTC 11711) (Mesomycoplasma mobile).